A 727-amino-acid polypeptide reads, in one-letter code: Fatty acid oxidation complex subunit alpha (727 aa).

The enoyl-CoA hydratase stretch occupies residues 16–205; the sequence is NQTASVFSFD…RLGLVDDAVP (190 aa). The interval 321–727 is 3-hydroxyacyl-CoA dehydrogenase; it reads AKIKHVGILG…MAEQNKSFYP (407 aa).

In the N-terminal section; belongs to the enoyl-CoA hydratase/isomerase family. This sequence in the central section; belongs to the 3-hydroxyacyl-CoA dehydrogenase family. Heterotetramer of two alpha chains (FadJ) and two beta chains (FadI).

It is found in the cytoplasm. It catalyses the reaction a (3S)-3-hydroxyacyl-CoA = a (2E)-enoyl-CoA + H2O. The catalysed reaction is a 4-saturated-(3S)-3-hydroxyacyl-CoA = a (3E)-enoyl-CoA + H2O. The enzyme catalyses a (3S)-3-hydroxyacyl-CoA + NAD(+) = a 3-oxoacyl-CoA + NADH + H(+). It carries out the reaction (3S)-3-hydroxybutanoyl-CoA = (3R)-3-hydroxybutanoyl-CoA. It functions in the pathway lipid metabolism; fatty acid beta-oxidation. Catalyzes the formation of a hydroxyacyl-CoA by addition of water on enoyl-CoA. Also exhibits 3-hydroxyacyl-CoA epimerase and 3-hydroxyacyl-CoA dehydrogenase activities. The sequence is that of Fatty acid oxidation complex subunit alpha from Photorhabdus laumondii subsp. laumondii (strain DSM 15139 / CIP 105565 / TT01) (Photorhabdus luminescens subsp. laumondii).